The primary structure comprises 24 residues: Caerin-2.1 (24 aa).

The protein belongs to the frog skin active peptide (FSAP) family. Caerin subfamily. As to expression, expressed by the skin dorsal glands.

The protein localises to the secreted. Functionally, inhibits the formation of NO by neuronal nitric oxide synthase. This is Caerin-2.1 from Litoria rothii (Roth's tree frog).